The following is a 178-amino-acid chain: Large ribosomal subunit protein uL6 (178 aa).

This sequence belongs to the universal ribosomal protein uL6 family. In terms of assembly, part of the 50S ribosomal subunit.

In terms of biological role, this protein binds to the 23S rRNA, and is important in its secondary structure. It is located near the subunit interface in the base of the L7/L12 stalk, and near the tRNA binding site of the peptidyltransferase center. This is Large ribosomal subunit protein uL6 from Clavibacter sepedonicus (Clavibacter michiganensis subsp. sepedonicus).